The sequence spans 417 residues: CinA-like protein (417 aa).

Belongs to the CinA family.

The polypeptide is CinA-like protein (Microcystis aeruginosa (strain NIES-843 / IAM M-2473)).